The sequence spans 231 residues: L-ribulose-5-phosphate 4-epimerase SgbE (231 aa).

Substrate contacts are provided by residues 27-28 (GN), 44-45 (SG), and 74-75 (SS). Residues Asp76, His95, and His97 each coordinate Zn(2+). Asp120 functions as the Proton donor/acceptor in the catalytic mechanism. Residue His171 coordinates Zn(2+). The active-site Proton donor/acceptor is the Tyr229.

This sequence belongs to the aldolase class II family. AraD/FucA subfamily. Requires Zn(2+) as cofactor.

The catalysed reaction is L-ribulose 5-phosphate = D-xylulose 5-phosphate. Functionally, catalyzes the interconversion of L-ribulose 5-phosphate (LRu5P) and D-xylulose 5-phosphate (D-Xu5P) via a retroaldol/aldol mechanism (carbon-carbon bond cleavage analogous to a class II aldolase reaction). May be involved in the utilization of 2,3-diketo-L-gulonate. This chain is L-ribulose-5-phosphate 4-epimerase SgbE, found in Escherichia coli (strain K12).